The following is an 800-amino-acid chain: Integrin beta-5 (800 aa).

The N-terminal stretch at 1–24 is a signal peptide; that stretch reads MPRAPALLFSCLLGLCALVPRLPG. The Extracellular segment spans residues 25 to 722; it reads LNICTSGSAT…PECGTAPSAM (698 aa). The 50-residue stretch at 27 to 76 folds into the PSI domain; it reads ICTSGSATSCEECLLIHPKCAWCFKEDFGSLRSVTSRCDLKANLIRNGCG. 19 disulfide bridges follow: Cys28–Cys46, Cys36–Cys463, Cys39–Cys64, Cys49–Cys75, Cys202–Cys211, Cys259–Cys300, Cys401–Cys413, Cys433–Cys461, Cys465–Cys484, Cys476–Cys487, Cys489–Cys498, Cys500–Cys530, Cys513–Cys528, Cys522–Cys533, Cys535–Cys548, Cys550–Cys571, Cys555–Cys569, Cys563–Cys574, and Cys576–Cys585. The VWFA domain occupies 136-378; the sequence is YPVDLYYLMD…QLIINAYNSI (243 aa). Mg(2+) is bound by residues Ser147 and Ser149. Positions 149, 152, 153, and 184 each coordinate Ca(2+). Residues Asn242, Asp244, Pro246, and Glu247 each coordinate Ca(2+). Glu247 is a Mg(2+) binding site. Asn347 carries an N-linked (GlcNAc...) asparagine glycan. Residue Gly362 participates in Ca(2+) binding. I-EGF domains are found at residues 465–499, 500–549, 550–586, and 587–626; these read CSAGLEPDSARCSSNGTYVCGLCECNPGYLGTRCE, CQEG…SFCE, CDNFSCARNKGVLCSGHGECHCGECKCHAGYIGDNCN, and CSTDISTCQARDGHICSDRGHCVCGQCQCTEPGAFGETCE. The N-linked (GlcNAc...) asparagine glycan is linked to Asn479. A glycan (N-linked (GlcNAc...) asparagine) is linked at Asn552. Asn586 carries an N-linked (GlcNAc...) asparagine glycan. Intrachain disulfides connect Cys587–Cys610, Cys594–Cys608, Cys602–Cys613, Cys615–Cys625, Cys628–Cys631, Cys635–Cys683, Cys641–Cys662, Cys644–Cys658, and Cys691–Cys715. Residues Asn655 and Asn706 are each glycosylated (N-linked (GlcNAc...) asparagine). A helical transmembrane segment spans residues 723-743; the sequence is TILLAVVGSILLTGFALLVIW. Over 744-800 the chain is Cytoplasmic; it reads KLLVTIHDRREFAKFQSERSRARYEMASNPLYRKPISTHTVDFTFNKFNKSYNGTVD. Ser771 is modified (phosphoserine).

The protein belongs to the integrin beta chain family. In terms of assembly, heterodimer of an alpha and a beta subunit. Beta-5 (ITGB5) associates with alpha-V (ITGAV). Interacts with MYO10. Interacts with DAB2. Integrin ITGAV:ITGB5 interacts with FBLN5 (via N-terminus). ITGAV:ITGB5 interacts with CCN3. Interacts with tensin TNS3; TNS3 also interacts with PEAK1, thus acting as an adapter molecule to bridge the association of PEAK1 with ITGB5.

It localises to the cell membrane. Integrin alpha-V/beta-5 (ITGAV:ITGB5) is a receptor for fibronectin. It recognizes the sequence R-G-D in its ligand. The polypeptide is Integrin beta-5 (ITGB5) (Bos taurus (Bovine)).